A 169-amino-acid chain; its full sequence is Large ribosomal subunit protein bL9 (169 aa).

It belongs to the bacterial ribosomal protein bL9 family.

Binds to the 23S rRNA. The sequence is that of Large ribosomal subunit protein bL9 from Chlamydia pneumoniae (Chlamydophila pneumoniae).